The primary structure comprises 1300 residues: Nephrocystin-3 (1300 aa).

The stretch at 82-183 (KNNEVASMQK…LQRLQAQGIQ (102 aa)) forms a coiled coil. TPR repeat units follow at residues 443–476 (TMEDDDYGDVLWDVHDEQEQMEAYQQASQSICEL), 916–949 (ADLYETLGRFLKDLGLLSQAVTPLQRSLEIRETA), 958–991 (AQSLHQLAGVYMQSKKFGNAEQLYKQALEISENA), 1000–1033 (ARELDALAVLYQKQNKFEQAEQLRKKSLKIRQKS), 1066–1099 (ARTLNELGVLYYLQNNLETAETFLKRSLEMRERV), 1108–1141 (AQSINNLAALYNEKKQYDKAEELYERALDIRRRA), 1150–1183 (AYTVKHLAVLYKRKGKLDKAVPLYELAVDIRQKS), 1192–1225 (ATALVNLAVLYCQMKKQDDALPLYERAMKIYEDS), and 1234–1267 (GETLKNLAVLRYEEGDYEKAAELYKRAMEIKETE). The interval 1268 to 1288 (TSVLGAKAPSGHSSSGGDTYS) is disordered. The segment covering 1278–1288 (GHSSSGGDTYS) has biased composition (polar residues).

The protein resides in the cell projection. It localises to the cilium. Required for normal ciliary development and function. Inhibits disheveled-1-induced canonical Wnt-signaling activity and may also play a role in the control of non-canonical Wnt signaling that regulates planar cell polarity. Probably acts as a molecular switch between different Wnt signaling pathways. Required for proper convergent extension cell movements. This chain is Nephrocystin-3 (nphp3), found in Xenopus laevis (African clawed frog).